Here is a 198-residue protein sequence, read N- to C-terminus: Virion membrane protein A17 precursor homolog (198 aa).

At 1 to 55 the chain is on the virion surface side; the sequence is MDNNYLNYYNVFEEFDAGAGIKEKELFTEEQQLSFLPKKGLGNGGFDGVERLYSN. The chain crosses the membrane as a helical span at residues 56–76; the sequence is IINNNDIKSLLALIMLVFAIN. Residues 77 to 145 are Intravirion-facing; that stretch reads TNSLVALIFI…TSKISKGFKR (69 aa). A helical membrane pass occupies residues 146 to 166; that stretch reads AIDVVLLVILGFYIVKIYGID. The Virion surface segment spans residues 167 to 198; sequence RQISIPSRRYCRQMSGPSSLENLNAFQTHSNY. Tyr-198 bears the Phosphotyrosine mark.

The protein belongs to the chordopoxvirinae A17 family. Interacts (via N-terminus) with D13 scaffold; this interaction helps D13 to associate with membranes. Interacts with A14. Interacts with A27; this interaction allows A27 to be anchored in the mature virion (MV) membrane. Part of a complex composed of A17, A25, A26 and A27. In terms of processing, the 22 kDa precursor is probably cleaved by the I7 protease during virus maturation. Phosphorylated on tyrosine and threonine. Its phosphorylation state is regulated by the F10 kinase and the H1 phosphatase. Phosphorylation by F10 kinase seems to be required to form the membranes associated with IV.

It localises to the virion membrane. Envelope protein which participates in virus morphogenesis. Needed for an early step in viral crescent membrane formation by interacting with D13 scaffold protein. Its interaction with D13 scaffold protein leads to the formation of rigid, crescent-shaped membranes that assemble around the cytoplasmic virus factory. Membrane anchor for the protein A27. A17-A27 virus envelope protein might be involved in fusion or attachment, and can further associate to A26. The chain is Virion membrane protein A17 precursor homolog from Fowlpox virus (strain NVSL) (FPV).